A 201-amino-acid polypeptide reads, in one-letter code: Phosphoprotein (201 aa).

Disordered regions lie at residues 1–70 (MATR…EQLS) and 176–201 (PSHPAPPRIYPQLPSAPTTDEWDIIP). 2 consecutive short sequence motifs (nuclear localization signal) follow at residues 29 to 36 (PRPRKVPR) and 181 to 193 (PPRIYPQLPSAPT).

Homomultimer; only active in its oligomeric state. Interacts with nucleoprotein/N. Interacts with matrix/M protein. Interacts with host TBK1. Interacts with polymerase L. Interacts with host HMGB1; this interaction is required to stabilize RNP on chromosomes. Post-translationally, phosphorylated by host PKC epsilon and casein kinase II.

The protein localises to the host nucleus. It localises to the host cytoplasm. In terms of biological role, essential component of the RNA polymerase transcription and replication complex. Acts as a scaffold which brings L in close proximity to the N-RNA complex. Plays a role in the segregation of the viral genome in host daughter cells during mitosis by interacting with host HMGB1, a host chromatin-remodeling DNA architectural protein, thereby stabilizing RNP on chromosomes. Interacts with host TBK1 and thus interferes with activation of cellular antiviral state. Inhibits cellular histone acetyltransferase activities. This Bos taurus (Bovine) protein is Phosphoprotein (P/X).